The following is a 143-amino-acid chain: Ribonuclease P protein component (143 aa).

The segment at 111–143 (RVKRKGGGPGGNRRSAPPGSAPLTDDGRLRGEP) is disordered.

The protein belongs to the RnpA family. Consists of a catalytic RNA component (M1 or rnpB) and a protein subunit.

The catalysed reaction is Endonucleolytic cleavage of RNA, removing 5'-extranucleotides from tRNA precursor.. RNaseP catalyzes the removal of the 5'-leader sequence from pre-tRNA to produce the mature 5'-terminus. It can also cleave other RNA substrates such as 4.5S RNA. The protein component plays an auxiliary but essential role in vivo by binding to the 5'-leader sequence and broadening the substrate specificity of the ribozyme. The chain is Ribonuclease P protein component from Deinococcus geothermalis (strain DSM 11300 / CIP 105573 / AG-3a).